Consider the following 987-residue polypeptide: Centrosomal protein of 120 kDa (987 aa).

A C2 1 domain is found at M1 to Y112. Residues K352–L408 are disordered. The region spanning S438–G567 is the C2 2 domain. A coiled-coil region spans residues E670–Y919. The segment covering R912–A926 has biased composition (basic and acidic residues). A disordered region spans residues R912–A937. S936 carries the phosphoserine modification.

The protein belongs to the CEP120 family. In terms of assembly, interacts with TACC2 and TACC3. Interacts with CCDC52.

The protein localises to the cytoplasm. The protein resides in the cytoskeleton. It localises to the microtubule organizing center. Its subcellular location is the centrosome. In terms of biological role, plays a role in the microtubule-dependent coupling of the nucleus and the centrosome. Involved in the processes that regulate centrosome-mediated interkinetic nuclear migration (INM) of neural progenitors and for proper positioning of neurons during brain development. Also implicated in the migration and selfrenewal of neural progenitors. May play a role in centriole duplication during mitosis. Required for the recruitment of CEP295 to the proximal end of new-born centrioles at the centriolar microtubule wall during early S phase in a PLK4-dependent manner. The chain is Centrosomal protein of 120 kDa (CEP120) from Bos taurus (Bovine).